The chain runs to 1216 residues: DNA-directed RNA polymerase subunit beta (1216 aa).

The disordered stretch occupies residues 1185–1216; sequence EEKQELPSQEYESLNLDQELKTASENVSESEF. The span at 1190–1216 shows a compositional bias: polar residues; it reads LPSQEYESLNLDQELKTASENVSESEF.

Belongs to the RNA polymerase beta chain family. As to quaternary structure, the RNAP catalytic core consists of 2 alpha, 1 beta, 1 beta' and 1 omega subunit. When a sigma factor is associated with the core the holoenzyme is formed, which can initiate transcription.

The enzyme catalyses RNA(n) + a ribonucleoside 5'-triphosphate = RNA(n+1) + diphosphate. Functionally, DNA-dependent RNA polymerase catalyzes the transcription of DNA into RNA using the four ribonucleoside triphosphates as substrates. The sequence is that of DNA-directed RNA polymerase subunit beta from Mycoplasmopsis pulmonis (strain UAB CTIP) (Mycoplasma pulmonis).